A 445-amino-acid chain; its full sequence is ATP-dependent rRNA helicase rrp3 (445 aa).

Residues 1-10 show a composition bias toward basic and acidic residues; it reads MSKNSSRDSS. The segment at 1–28 is disordered; that stretch reads MSKNSSRDSSPEEVSPDTETPSTTTAPK. The span at 17-28 shows a compositional bias: low complexity; that stretch reads DTETPSTTTAPK. The Q motif signature appears at 28–56; sequence KTFRELGVIDSLCEACEELGYTAPTPIQE. The Helicase ATP-binding domain maps to 59-229; the sequence is IPIALEGRDL…RASLSDPVRV (171 aa). Position 72-79 (72-79) interacts with ATP; the sequence is AETGSGKT. Residues 178-181 carry the DEAD box motif; sequence DEAD. Positions 240–400 constitute a Helicase C-terminal domain; that stretch reads KLLQSYLFIP…EYKPEKDEVM (161 aa). A disordered region spans residues 415-445; sequence LTMRDMQDKDNKGRGPRNRKRTRDDLDQDDG.

Belongs to the DEAD box helicase family. DDX47/RRP3 subfamily. Interacts with the SSU processome.

It is found in the nucleus. It carries out the reaction ATP + H2O = ADP + phosphate + H(+). In terms of biological role, ATP-dependent rRNA helicase required for pre-ribosomal RNA processing. Involved in the maturation of the 35S-pre-rRNA and to its cleavage to mature 18S rRNA. The sequence is that of ATP-dependent rRNA helicase rrp3 from Aspergillus terreus (strain NIH 2624 / FGSC A1156).